The chain runs to 189 residues: MARDVKKRGKPAYTNRRNRQKYLKKKDNKKKLSKSAVPIIKYTWDETKTPRENVRDMGIAFNPNDAVPIAEHRKEIIDAEPIDGVSIVVPKPEKKVTGRKKNEKQAAHIISNLEQQVKEEEEARAGQDRKFRLFHRETELCVYMLARHGEDFQAMTRDPKNLWQYTPKQWAKKIRTHKESEMCKFLETA.

Residues 1–33 (MARDVKKRGKPAYTNRRNRQKYLKKKDNKKKLS) show a composition bias toward basic residues. The interval 1-34 (MARDVKKRGKPAYTNRRNRQKYLKKKDNKKKLSK) is disordered.

Belongs to the NOP16 family.

It localises to the nucleus. The protein localises to the nucleolus. This Caenorhabditis elegans protein is Nucleolar protein 16.